Consider the following 150-residue polypeptide: Nascent polypeptide-associated complex subunit beta (150 aa).

Disordered regions lie at residues 1–45 (MADV…LQQS) and 123–150 (YQNM…NKVE). The span at 23 to 32 (TPRRKVKRAP) shows a compositional bias: basic residues. The NAC-A/B domain occupies 36 to 101 (GADDKKLQQS…GEDKELTELV (66 aa)).

Belongs to the NAC-beta family. In terms of assembly, part of the nascent polypeptide-associated complex (NAC), consisting of EGD2 and EGD1. NAC associates with ribosomes via EGD1.

Its subcellular location is the cytoplasm. It is found in the nucleus. Its function is as follows. Component of the nascent polypeptide-associated complex (NAC), a dynamic component of the ribosomal exit tunnel, protecting the emerging polypeptides from interaction with other cytoplasmic proteins to ensure appropriate nascent protein targeting. The NAC complex also promotes mitochondrial protein import by enhancing productive ribosome interactions with the outer mitochondrial membrane and blocks the inappropriate interaction of ribosomes translating non-secretory nascent polypeptides with translocation sites in the membrane of the endoplasmic reticulum. EGD1 may act as a transcription factor that exert a negative effect on the expression of several genes that are transcribed by RNA polymerase II. This chain is Nascent polypeptide-associated complex subunit beta (EGD1), found in Chaetomium globosum (strain ATCC 6205 / CBS 148.51 / DSM 1962 / NBRC 6347 / NRRL 1970) (Soil fungus).